The chain runs to 37 residues: Large ribosomal subunit protein bL36 (37 aa).

The protein belongs to the bacterial ribosomal protein bL36 family.

The sequence is that of Large ribosomal subunit protein bL36 from Synechococcus sp. (strain RCC307).